The primary structure comprises 443 residues: Major royal jelly protein 7 (443 aa).

Positions 1-17 (MTRWLFMVACLGIACQG) are cleaved as a signal peptide. 4 N-linked (GlcNAc...) asparagine glycosylation sites follow: Asn-145, Asn-161, Asn-178, and Asn-321.

The protein belongs to the major royal jelly protein family. As to expression, found in and secreted from the hypopharyngeal glands of the worker honey bee (at protein level); expression peaks at 12 days post eclosion. Expressed in the brains of adult worker bees peaking at 12 days post eclosion (at protein level). Expressed in the spermatheca of adult queen bees (at protein level); Expression levels are higher in mated queens than in virgin queens.

It is found in the secreted. In terms of biological role, component of royal jelly, a substance produced in the hypopharyngeal gland containing proteins, free amino acids, fatty acids, sugars and other nutrients, which is fed to developing larvae by worker nurse bees. All larvae are fed some royal jelly (also known as worker jelly) early in their development but it forms the principal source of nutrition for larvae destined to become queen bees. Produced in the spermatheca of adult queen bees, along with other major royal jelly proteins, where it may act as a nutrient supply for sperm stored by mated queens, or be involved in energy metabolism. The protein is Major royal jelly protein 7 of Apis mellifera (Honeybee).